We begin with the raw amino-acid sequence, 624 residues long: Probable potassium transport system protein Kup 1 (624 aa).

The next 12 helical transmembrane spans lie at 10-30, 48-68, 94-114, 133-153, 159-179, 210-230, 242-262, 270-290, 331-351, 363-383, 388-408, and 413-433; these read LALG…LYAL, LSLI…MIIF, PLFY…GMLT, LYPY…SLQA, IGYL…ILGI, FLLG…ADIG, FFIA…NLIV, PFFM…ATVA, IYVP…CLAF, IAVN…AVSI, TFNV…FLGA, and FITG…IMYS.

This sequence belongs to the HAK/KUP transporter (TC 2.A.72) family.

Its subcellular location is the cell inner membrane. The catalysed reaction is K(+)(in) + H(+)(in) = K(+)(out) + H(+)(out). Functionally, transport of potassium into the cell. Likely operates as a K(+):H(+) symporter. The protein is Probable potassium transport system protein Kup 1 of Legionella pneumophila subsp. pneumophila (strain Philadelphia 1 / ATCC 33152 / DSM 7513).